The primary structure comprises 361 residues: 3-dehydroquinate synthase (361 aa).

Residues 60–65, 94–98, 118–119, Lys131, and Lys140 each bind NAD(+); these read DAEAAK, GATTD, and TT. Glu173, His242, and His258 together coordinate Zn(2+).

It belongs to the sugar phosphate cyclases superfamily. Dehydroquinate synthase family. It depends on Co(2+) as a cofactor. Zn(2+) serves as cofactor. The cofactor is NAD(+).

Its subcellular location is the cytoplasm. The catalysed reaction is 7-phospho-2-dehydro-3-deoxy-D-arabino-heptonate = 3-dehydroquinate + phosphate. It participates in metabolic intermediate biosynthesis; chorismate biosynthesis; chorismate from D-erythrose 4-phosphate and phosphoenolpyruvate: step 2/7. Functionally, catalyzes the conversion of 3-deoxy-D-arabino-heptulosonate 7-phosphate (DAHP) to dehydroquinate (DHQ). This chain is 3-dehydroquinate synthase, found in Cutibacterium acnes (strain DSM 16379 / KPA171202) (Propionibacterium acnes).